The primary structure comprises 348 residues: 4-hydroxy-2-oxovalerate aldolase (348 aa).

The Pyruvate carboxyltransferase domain maps to 9 to 261; that stretch reads ITVHDMTLRD…RTGVDVWKIQ (253 aa). 17-18 is a binding site for substrate; the sequence is RD. Residue D18 coordinates Mn(2+). H21 functions as the Proton acceptor in the catalytic mechanism. S171 and H200 together coordinate substrate. The Mn(2+) site is built by H200 and H202. Substrate is bound at residue Y291.

The protein belongs to the 4-hydroxy-2-oxovalerate aldolase family.

It carries out the reaction (S)-4-hydroxy-2-oxopentanoate = acetaldehyde + pyruvate. The chain is 4-hydroxy-2-oxovalerate aldolase from Ralstonia pickettii (strain 12J).